A 226-amino-acid chain; its full sequence is UPF0502 protein Daci_5373 (226 aa).

The protein belongs to the UPF0502 family.

This Delftia acidovorans (strain DSM 14801 / SPH-1) protein is UPF0502 protein Daci_5373.